A 187-amino-acid chain; its full sequence is dTTP/UTP pyrophosphatase (187 aa).

The Proton acceptor role is filled by D65.

This sequence belongs to the Maf family. YhdE subfamily. Requires a divalent metal cation as cofactor.

Its subcellular location is the cytoplasm. The catalysed reaction is dTTP + H2O = dTMP + diphosphate + H(+). It carries out the reaction UTP + H2O = UMP + diphosphate + H(+). In terms of biological role, nucleoside triphosphate pyrophosphatase that hydrolyzes dTTP and UTP. May have a dual role in cell division arrest and in preventing the incorporation of modified nucleotides into cellular nucleic acids. The sequence is that of dTTP/UTP pyrophosphatase from Deinococcus geothermalis (strain DSM 11300 / CIP 105573 / AG-3a).